Reading from the N-terminus, the 770-residue chain is ARF GTPase-activating protein GIT1 (770 aa).

One can recognise an Arf-GAP domain in the interval 1 to 124 (MSRKGPRAEV…AFVHKLPCRD (124 aa)). The tract at residues 1–124 (MSRKGPRAEV…AFVHKLPCRD (124 aa)) is interaction with gamma-tubulin and localization to the centrosome. The C4-type zinc finger occupies 11–34 (CADCSAPDPGWASISRGVLVCDEC). ANK repeat units follow at residues 132-161 (DLSK…QANF), 166-195 (KGTT…DPGS), and 199-228 (NGRT…ELTD). Tyr224 carries the post-translational modification Phosphotyrosine. Residues 245–374 (HYIIPQMADR…QGKSLSSPTD (130 aa)) are interaction with PCLO. The segment at 253-424 (DRSRQKCMSQ…NRARSMDSSD (172 aa)) is interaction with PTK2/FAK1. Residues 254–376 (RSRQKCMSQS…KSLSSPTDNL (123 aa)) are interaction with ARHGEF7. Residues 363–425 (RQQGKSLSSP…RARSMDSSDL (63 aa)) form a disordered region. Residues 366-383 (GKSLSSPTDNLELSARNQ) show a composition bias toward polar residues. A phosphoserine mark is found at Ser368 and Ser371. Thr373 is modified (phosphothreonine). Residues 375–596 (NLELSARNQS…QEGSRHASKL (222 aa)) form an interaction with NCK2 and GRIN3A region. The tract at residues 375–596 (NLELSARNQS…QEGSRHASKL (222 aa)) is required for localization at synapses. A phosphoserine mark is found at Ser379 and Ser384. Phosphotyrosine is present on Tyr392. Phosphoserine occurs at positions 394 and 397. Residues 394–403 (SVASDEDTDQ) are compositionally biased toward acidic residues. At Thr401 the chain carries Phosphothreonine. 3 positions are modified to phosphoserine: Ser419, Ser422, and Ser426. The tract at residues 420 to 475 (MDSSDLSDGAVTLQEYLELKKALATSEAKVQQLMKVNSSLSDELRKLQREIHKLQA) is interaction with MAPK1. The interaction with IKBKG stretch occupies residues 429–629 (AVTLQEYLEL…EGKRFLELSK (201 aa)). Residues 449-483 (VQQLMKVNSSLSDELRKLQREIHKLQAENLQLRQP) are a coiled coil. A phosphoserine mark is found at Ser507 and Ser545. The residue at position 546 (Thr546) is a Phosphothreonine. A phosphotyrosine mark is found at Tyr554 and Tyr563. Phosphoserine occurs at positions 570, 580, 601, and 605. Residues 574–586 (VTFTPSSPLLSSS) show a composition bias toward low complexity. The disordered stretch occupies residues 574–615 (VTFTPSSPLLSSSQEGSRHASKLSRHGSGAESDYENTQSGEP). Thr610 is subject to Phosphothreonine. Ser639 carries the phosphoserine modification. The interaction with PXN and TGFB1I1 stretch occupies residues 646 to 770 (PGLPSTEDVI…VTITTREKKQ (125 aa)).

Forms homodimers and possibly oligomers. May form heterooligomers with GIT2. Interacts with G protein-coupled receptor kinases, including GRK2, GRK3, GRK5 and GRK6. Interacts with PPFIA1, PPFIA2 and PPFIA4. Interacts with GRIP1 and forms a ternary complex with PPFIA1 and GRIP1. Directly interacts with ARHGEF7/beta-PIX, forming in vitro a heptameric complex made of a GIT1 dimer and an ARHGEF7 trimer. Directly interacts with PXN/paxillin; this interaction is enhanced in the presence of ARHGEF7. Directly interacts (via C-terminus) with TGFB1I1/Hic-5 (via LD motif 3). Directly interacts with PTK2/FAK1. May interact with PTK2B/PYK2; this interaction may be indirect. Interacts with AMPA receptors GRIA2/3. Directly interacts with protein Piccolo/PCLO. Forms a complex with Ephrin-B1/EFNB1 and NCK2/GRB4 (via SH2); this interaction is important for spine morphogenesis and synapse formation. Interaction with NCK2 is transient and depends upon GIT1 phosphorylation at Tyr-392. Interacts with GRIN3A/GluN3A (via C-terminus); this interaction competes with GIT1 interaction with ARHGEF7 and limits synaptic localization of GIT1. Interacts with IKBKG/NEMO in resting bone mesenchymal stem cells, as well as in TNF-stimulated cells; this interaction may increase IKBKG affinity for 'Lys-63'-linked polyubiquitin chains. Interacts with GABA(A) receptors, including GABRB3 and GABRG2. Interacts with SCRIB. Interacts (via N- and C-terminus) with ENTR1/SDCCAG3 (via N-terminus); this interaction is direct. May form a tripartite complex with ENTR1 and PTPN13. Interacts with YWHAZ. Interacts with PAK1 and PAK3. Directly interacts (via N-terminus) with gamma-tubulin. Interacts with MAPK1 and MAPK3; this interaction is required for MAPK1/3 recruitment to focal adhesions. Phosphorylated on tyrosine residues by PTK2/FAK1 and SRC in growing fibroblasts. Phosphorylation at Tyr-392 is induced by activation of Ephrin-B1/EFNB1 and catalyzed by SRC family kinases. It is required for the interaction with NCK2 and for GIT1 recruitment to synapses in hippocampal neurons. Widely expressed. Expressed at high levels in testis (at protein level). Expressed in the brain, including in CA1 hippocampal neurons, in the amygdala, and thalamic nuclei (at protein level).

Its subcellular location is the cytoplasm. It is found in the synapse. The protein localises to the presynapse. The protein resides in the postsynapse. It localises to the postsynaptic density. Its subcellular location is the cell junction. It is found in the focal adhesion. The protein localises to the cell projection. The protein resides in the lamellipodium. It localises to the cytoskeleton. Its subcellular location is the microtubule organizing center. It is found in the centrosome. The protein localises to the spindle pole. Its function is as follows. GTPase-activating protein for ADP ribosylation factor family members, including ARF1. Multidomain scaffold protein that interacts with numerous proteins and therefore participates in many cellular functions, including receptor internalization, focal adhesion remodeling, and signaling by both G protein-coupled receptors and tyrosine kinase receptors. Through PAK1 activation, positively regulates microtubule nucleation during interphase. Plays a role in the regulation of cytokinesis; for this function, may act in a pathway also involving ENTR1 and PTPN13. May promote cell motility both by regulating focal complex dynamics and by the activation of RAC1. May act as scaffold for MAPK1/3 signal transduction, recruiting MAPK1/3 to focal adhesions after EGF stimulation via a Src-dependent pathway, hence stimulating cell migration. Plays a role in brain development and function. Involved in the regulation of spine density and synaptic plasticity that is required for processes involved in learning. Plays an important role in dendritic spine morphogenesis and synapse formation. In hippocampal neurons, recruits guanine nucleotide exchange factors (GEFs), such as ARHGEF7/beta-PIX, to the synaptic membrane. These in turn locally activate RAC1, which is an essential step for spine morphogenesis and synapse formation. May contribute to the organization of presynaptic active zones through oligomerization and formation of a Piccolo/PCLO-based protein network, which includes ARHGEF7/beta-PIX and FAK1. In neurons, through its interaction with liprin-alpha family members, may be required for AMPA receptor (GRIA2/3) proper targeting to the cell membrane. In complex with GABA(A) receptors and ARHGEF7, plays a crucial role in regulating GABA(A) receptor synaptic stability, maintaining GPHN/gephyrin scaffolds and hence GABAergic inhibitory synaptic transmission, by locally coordinating RAC1 and PAK1 downstream effector activity, leading to F-actin stabilization. May also be important for RAC1 downstream signaling pathway through PAK3 and regulation of neuronal inhibitory transmission at presynaptic input. Required for successful bone regeneration during fracture healing. The function in intramembranous ossification may, at least partly, exerted by macrophages in which GIT1 is a key negative regulator of redox homeostasis, IL1B production, and glycolysis, acting through the ERK1/2/NRF2/NFE2L2 axis. May also play a role in angiogenesis during fracture healing. In this process, may regulate activation of the canonical NF-kappa-B signal in bone mesenchymal stem cells by enhancing the interaction between NEMO and 'Lys-63'-ubiquitinated RIPK1/RIP1, eventually leading to enhanced production of VEGFA and others angiogenic factors. Essential for VEGF signaling through the activation of phospholipase C-gamma and ERK1/2, hence may control endothelial cell proliferation and angiogenesis. This is ARF GTPase-activating protein GIT1 from Rattus norvegicus (Rat).